The sequence spans 124 residues: Small ribosomal subunit protein uS12 (124 aa).

A disordered region spans residues 1-27; it reads MPTINQLIRKPRKSQTEKTASPALQNC. Positions 17–27 are enriched in polar residues; sequence EKTASPALQNC. 3-methylthioaspartic acid is present on Asp89.

The protein belongs to the universal ribosomal protein uS12 family. In terms of assembly, part of the 30S ribosomal subunit. Contacts proteins S8 and S17. May interact with IF1 in the 30S initiation complex.

Functionally, with S4 and S5 plays an important role in translational accuracy. Interacts with and stabilizes bases of the 16S rRNA that are involved in tRNA selection in the A site and with the mRNA backbone. Located at the interface of the 30S and 50S subunits, it traverses the body of the 30S subunit contacting proteins on the other side and probably holding the rRNA structure together. The combined cluster of proteins S8, S12 and S17 appears to hold together the shoulder and platform of the 30S subunit. The protein is Small ribosomal subunit protein uS12 of Borreliella afzelii (strain PKo) (Borrelia afzelii).